The chain runs to 139 residues: uncharacterized protein (139 aa).

A compositionally biased stretch (polar residues) spans 1-11; sequence MALSMSLSSDI. 2 disordered regions span residues 1 to 80 and 100 to 139; these read MALS…AAAA and ASSP…LARS. A compositionally biased stretch (low complexity) spans 63–80; it reads GAGSASAGGSRLAAAAAA.

This is an uncharacterized protein from Homo sapiens (Human).